The chain runs to 603 residues: MVNNMTDLTAQDAVLPVWQTRDHLDDPVIGELRNRFGPDAFTVQATRTGVPVVWVKREQLLEVGEFLRKLPKPYVMLYDLHGMDERLRTHRNGLPAADFSVFYHLLSIDRNRDIMLKVALSENDLNVPTFTRLFPNANWYERETWEMFGITFTGHPNLRRIMMPPTWEGHPLRKDYPARATEFDPFTLTKQKEELEMEALTFKPEEWGMKRGNDTEDFMFLNLGPNHPSAHGAFRIILQLDGEEIVDCVPDIGYHHRGAEKMGERQSWHSYIPYTDRVEYLGGCVNEMPYVLAVEKLAGIQVPERVEVIRVMLSELFRINSHLLYISTFIQDVGAMTPVFFAFTDRQKIYDLVEAITGFRMHPAWFRIGGVAHDLPRGWDRLLKEFLEWMPKRLDSYVKAALKNTILKGRSQGVAAYDAKEALAWGTTGAGLRATGIDFDVRKARPYSGYQNFEFEVPVGGGISDCYTRVMLKVEEVRQSLRILEQCLKNMPEGPFKADHPLTTPPPKERTLQHIETLITHFLQVSWGPVMPANESFQMIEATKGINSYYLTSDGSTMSYRTRVRTPSFPHLQQIPSVIRGSLVSDLIVYLGSIDFVMSDVDR.

The NADH dehydrogenase I subunit C stretch occupies residues 1-193 (MVNNMTDLTA…DPFTLTKQKE (193 aa)). Residues 217-603 (DFMFLNLGPN…IDFVMSDVDR (387 aa)) form an NADH dehydrogenase I subunit D region.

The protein in the N-terminal section; belongs to the complex I 30 kDa subunit family. In the C-terminal section; belongs to the complex I 49 kDa subunit family. In terms of assembly, NDH-1 is composed of 13 different subunits. Subunits NuoB, CD, E, F, and G constitute the peripheral sector of the complex.

It is found in the cell inner membrane. It carries out the reaction a quinone + NADH + 5 H(+)(in) = a quinol + NAD(+) + 4 H(+)(out). Functionally, NDH-1 shuttles electrons from NADH, via FMN and iron-sulfur (Fe-S) centers, to quinones in the respiratory chain. The immediate electron acceptor for the enzyme in this species is believed to be ubiquinone. Couples the redox reaction to proton translocation (for every two electrons transferred, four hydrogen ions are translocated across the cytoplasmic membrane), and thus conserves the redox energy in a proton gradient. This chain is NADH-quinone oxidoreductase subunit C/D, found in Cronobacter sakazakii (strain ATCC BAA-894) (Enterobacter sakazakii).